A 505-amino-acid polypeptide reads, in one-letter code: Protein disulfide-isomerase A3 (505 aa).

The N-terminal stretch at 1–24 is a signal peptide; that stretch reads MRFSCLALLPGVALLLASALLASA. The Thioredoxin 1 domain maps to 25-133; sequence SDVLELTDEN…IVSHLKKQAG (109 aa). Catalysis depends on nucleophile residues C57 and C60. A disulfide bridge connects residues C57 and C60. N6-methyllysine is present on K61. C85 and C92 are oxidised to a cystine. Residue K129 is modified to N6-succinyllysine. The residue at position 152 (K152) is an N6-acetyllysine. Residue K218 is modified to N6-succinyllysine. K252 bears the N6-acetyllysine mark. Position 319 is a phosphothreonine (T319). One can recognise a Thioredoxin 2 domain in the interval 343-485; sequence SRDGKALERF…FISYLQREAT (143 aa). At K362 the chain carries N6-acetyllysine. Catalysis depends on nucleophile residues C406 and C409. C406 and C409 are disulfide-bonded. A disordered region spans residues 484-505; sequence ATNPPIIQEEKPKKKKKAQEDL. Residues 491–505 show a composition bias toward basic and acidic residues; sequence QEEKPKKKKKAQEDL. An N6-acetyllysine modification is found at K494. The Prevents secretion from ER signature appears at 502–505; that stretch reads QEDL.

This sequence belongs to the protein disulfide isomerase family. Part of the major histocompatibility complex class I (MHC I) peptide loading complex composed of TAP1, TAP2, B2M, MHC heavy chain, TAPBP, PDIA3, and CALR. Interacts with ERP27 and CANX. Interacts with SERPINA2 and with SERPINA1. Interacts with ATP2A2. Post-translationally, within the major histocompatibility complex class I (MHC I) peptide loading complex forms reversible disulfide-linked heterodimers with TAPBP as part of its protein folding chaperone activity. This is essential to assist the dynamic assembly of the MHC I complex with high affinity antigens in the endoplasmic reticulum. Phosphorylated. In caput epididymal spermatozoa, detected in the head, mid and principal pieces. In cauda epididymal spermatozoa detected only in the acrosome (at protein level).

The protein localises to the endoplasmic reticulum. The protein resides in the endoplasmic reticulum lumen. It is found in the melanosome. It carries out the reaction Catalyzes the rearrangement of -S-S- bonds in proteins.. With respect to regulation, seems to be inhibited by acidic phospholipids. Its function is as follows. Protein disulfide isomerase that catalyzes the formation, isomerization, and reduction or oxidation of disulfide bonds in client proteins and functions as a protein folding chaperone. Core component of the major histocompatibility complex class I (MHC I) peptide loading complex where it functions as an essential folding chaperone for TAPBP. Through TAPBP, assists the dynamic assembly of the MHC I complex with high affinity antigens in the endoplasmic reticulum. Therefore, plays a crucial role in the presentation of antigens to cytotoxic T cells in adaptive immunity. This chain is Protein disulfide-isomerase A3 (Pdia3), found in Rattus norvegicus (Rat).